The sequence spans 701 residues: Elongation factor G (701 aa).

Positions 8-286 (ERIRNIGIIA…AIVHYLPSPV (279 aa)) constitute a tr-type G domain. GTP is bound by residues 17–24 (AHIDAGKT), 85–89 (DTPGH), and 139–142 (NKMD).

The protein belongs to the TRAFAC class translation factor GTPase superfamily. Classic translation factor GTPase family. EF-G/EF-2 subfamily.

The protein localises to the cytoplasm. In terms of biological role, catalyzes the GTP-dependent ribosomal translocation step during translation elongation. During this step, the ribosome changes from the pre-translocational (PRE) to the post-translocational (POST) state as the newly formed A-site-bound peptidyl-tRNA and P-site-bound deacylated tRNA move to the P and E sites, respectively. Catalyzes the coordinated movement of the two tRNA molecules, the mRNA and conformational changes in the ribosome. This chain is Elongation factor G, found in Roseiflexus sp. (strain RS-1).